A 270-amino-acid polypeptide reads, in one-letter code: tRNA (guanine-N(1)-)-methyltransferase (270 aa).

S-adenosyl-L-methionine-binding positions include Gly-113 and 133 to 138 (IGDYVL). The tract at residues 251–270 (APTEGTGLIHHRDVEGPGEG) is disordered. Basic and acidic residues predominate over residues 260 to 270 (HHRDVEGPGEG).

Belongs to the RNA methyltransferase TrmD family. In terms of assembly, homodimer.

It is found in the cytoplasm. It catalyses the reaction guanosine(37) in tRNA + S-adenosyl-L-methionine = N(1)-methylguanosine(37) in tRNA + S-adenosyl-L-homocysteine + H(+). Specifically methylates guanosine-37 in various tRNAs. This Frankia casuarinae (strain DSM 45818 / CECT 9043 / HFP020203 / CcI3) protein is tRNA (guanine-N(1)-)-methyltransferase.